Consider the following 259-residue polypeptide: Trypsin (259 aa).

A signal peptide spans 1–32; the sequence is MKHFLRALKRCSVAVATVAIAVVGLQPVTASA. Positions 33-36 are cleaved as a propeptide — activation peptide; the sequence is APNP. In terms of domain architecture, Peptidase S1 spans 37–257; that stretch reads VVGGTRAAQG…FASAIASAAR (221 aa). A disulfide bond links Cys58 and Cys74. Catalysis depends on charge relay system residues His73 and Asp118. Cystine bridges form between Cys177-Cys192 and Cys204-Cys233. The active-site Charge relay system is the Ser208.

It belongs to the peptidase S1 family.

It carries out the reaction Preferential cleavage: Arg-|-Xaa, Lys-|-Xaa.. The chain is Trypsin (sprT) from Streptomyces griseus.